A 299-amino-acid chain; its full sequence is Zinc import ATP-binding protein ZnuC (299 aa).

The 216-residue stretch at 13–228 (VSLANAGVQR…PEYMRLFGGT (216 aa)) folds into the ABC transporter domain. Residue 45–52 (GPNGSGKS) coordinates ATP.

It belongs to the ABC transporter superfamily. Zinc importer (TC 3.A.1.15.5) family. As to quaternary structure, the complex is composed of two ATP-binding proteins (ZnuC), two transmembrane proteins (ZnuB) and a solute-binding protein (ZnuA).

The protein localises to the cell inner membrane. It catalyses the reaction Zn(2+)(out) + ATP(in) + H2O(in) = Zn(2+)(in) + ADP(in) + phosphate(in) + H(+)(in). Its function is as follows. Part of the ABC transporter complex ZnuABC involved in zinc import. Responsible for energy coupling to the transport system. The chain is Zinc import ATP-binding protein ZnuC from Agrobacterium fabrum (strain C58 / ATCC 33970) (Agrobacterium tumefaciens (strain C58)).